The sequence spans 325 residues: Cytochrome c1, heme protein, mitochondrial (325 aa).

Residues 1–84 constitute a mitochondrion transit peptide; the sequence is MAAAAATLRG…AVALHSAVSA (84 aa). The Mitochondrial intermembrane portion of the chain corresponds to 85–281; that stretch reads SDLELHPPSY…TFLRWAAEPE (197 aa). The Cytochrome c domain maps to 108-209; that stretch reads TSIRRGFQVY…IVRARHGGED (102 aa). Residues Cys-121, Cys-124, His-125, and Met-244 each contribute to the heme c site. Residues 282-315 traverse the membrane as a helical segment; that stretch reads HDHRKRMGLKMLLMMGLLLPLVYAMKRHKWSVLK. The Mitochondrial matrix segment spans residues 316-325; sequence SRKLAYRPPK.

The protein belongs to the cytochrome c family. As to quaternary structure, component of the ubiquinol-cytochrome c oxidoreductase (cytochrome b-c1 complex, complex III, CIII), a multisubunit enzyme composed of 11 subunits. The complex is composed of 3 respiratory subunits cytochrome b, cytochrome c1 and Rieske protein UQCRFS1, 2 core protein subunits UQCRC1/QCR1 and UQCRC2/QCR2, and 6 low-molecular weight protein subunits UQCRH/QCR6, UQCRB/QCR7, UQCRQ/QCR8, UQCR10/QCR9, UQCR11/QCR10 and subunit 9, the cleavage product of Rieske protein UQCRFS1. The complex exists as an obligatory dimer and forms supercomplexes (SCs) in the inner mitochondrial membrane with NADH-ubiquinone oxidoreductase (complex I, CI) and cytochrome c oxidase (complex IV, CIV), resulting in different assemblies (supercomplex SCI(1)III(2)IV(1) and megacomplex MCI(2)III(2)IV(2)). Interacts with FLVCR2; this interaction occurs in the absence of heme and is disrupted upon heme binding. Requires heme c as cofactor.

It is found in the mitochondrion inner membrane. It carries out the reaction a quinol + 2 Fe(III)-[cytochrome c](out) = a quinone + 2 Fe(II)-[cytochrome c](out) + 2 H(+)(out). Functionally, component of the ubiquinol-cytochrome c oxidoreductase, a multisubunit transmembrane complex that is part of the mitochondrial electron transport chain which drives oxidative phosphorylation. The respiratory chain contains 3 multisubunit complexes succinate dehydrogenase (complex II, CII), ubiquinol-cytochrome c oxidoreductase (cytochrome b-c1 complex, complex III, CIII) and cytochrome c oxidase (complex IV, CIV), that cooperate to transfer electrons derived from NADH and succinate to molecular oxygen, creating an electrochemical gradient over the inner membrane that drives transmembrane transport and the ATP synthase. The cytochrome b-c1 complex catalyzes electron transfer from ubiquinol to cytochrome c, linking this redox reaction to translocation of protons across the mitochondrial inner membrane, with protons being carried across the membrane as hydrogens on the quinol. In the process called Q cycle, 2 protons are consumed from the matrix, 4 protons are released into the intermembrane space and 2 electrons are passed to cytochrome c. Cytochrome c1 is a catalytic core subunit containing a c-type heme. It transfers electrons from the [2Fe-2S] iron-sulfur cluster of the Rieske protein to cytochrome c. The polypeptide is Cytochrome c1, heme protein, mitochondrial (CYC1) (Bos taurus (Bovine)).